Consider the following 400-residue polypeptide: Telomeric repeat-binding factor 2-interacting protein 1 (400 aa).

A2 carries the N-acetylalanine modification. 2 positions are modified to phosphoserine: S36 and S43. The region spanning F78–L101 is the BRCT domain. The disordered stretch occupies residues S105 to E126. The span at E112–P125 shows a compositional bias: low complexity. A Glycyl lysine isopeptide (Lys-Gly) (interchain with G-Cter in SUMO2) cross-link involves residue K114. The 61-residue stretch at Q128 to L188 folds into the Myb-like domain. 2 positions are modified to phosphoserine: S154 and S156. K194 is covalently cross-linked (Glycyl lysine isopeptide (Lys-Gly) (interchain with G-Cter in SUMO2)). Disordered stretches follow at residues L196–Q244 and V264–E311. Residues S203 and S206 each carry the phosphoserine modification. Glycyl lysine isopeptide (Lys-Gly) (interchain with G-Cter in SUMO2) cross-links involve residues K208, K212, and K240. Positions C280–E305 are enriched in acidic residues. K373 participates in a covalent cross-link: Glycyl lysine isopeptide (Lys-Gly) (interchain with G-Cter in SUMO2). The Nuclear localization signal signature appears at K384–K400.

Belongs to the RAP1 family. In terms of assembly, associates with the I-kappa-B-kinase (IKK) core complex, composed of CHUK, IKBKB and IKBKG. Homodimer. Component of the shelterin complex (telosome) composed of TERF1, TERF2, TINF2, TERF2IP ACD and POT1. Interacts with TERF2 (but not TERF1) with its C-terminus. Interacts with SLX4/BTBD12. Interacts with TERF2; the interaction is direct.

It localises to the nucleus. Its subcellular location is the cytoplasm. It is found in the chromosome. The protein resides in the telomere. Acts both as a regulator of telomere function and as a transcription regulator. Involved in the regulation of telomere length and protection as a component of the shelterin complex (telosome). In contrast to other components of the shelterin complex, it is dispensible for telomere capping and does not participate in the protection of telomeres against non-homologous end-joining (NHEJ)-mediated repair. Instead, it is required to negatively regulate telomere recombination and is essential for repressing homology-directed repair (HDR), which can affect telomere length. Does not bind DNA directly: recruited to telomeric double-stranded 5'-TTAGGG-3' repeats via its interaction with TERF2. Independently of its function in telomeres, also acts as a transcription regulator: recruited to extratelomeric 5'-TTAGGG-3' sites via its association with TERF2 or other factors, and regulates gene expression. When cytoplasmic, associates with the I-kappa-B-kinase (IKK) complex and acts as a regulator of the NF-kappa-B signaling by promoting IKK-mediated phosphorylation of RELA/p65, leading to activate expression of NF-kappa-B target genes. The protein is Telomeric repeat-binding factor 2-interacting protein 1 (TERF2IP) of Macaca fascicularis (Crab-eating macaque).